The following is a 992-amino-acid chain: GATOR2 complex protein WDR59 (992 aa).

WD repeat units lie at residues 57–98 (QSKW…GEVG), 103–143 (GHTR…KPTV), 146–185 (SAVAGASQVKWNKKNANYLATSHDGDVRIWDKRKPSTAVE), 189–229 (AHLS…KYLN), 232–276 (PCQV…APVH), 278–318 (FVGH…RVDY), and 319–362 (QMQR…SLSH). Positions 343 to 373 (PEPEKTPHPQDIDHQPSLSHGEEDAIKEDPP) are disordered. Residues 344 to 373 (EPEKTPHPQDIDHQPSLSHGEEDAIKEDPP) are compositionally biased toward basic and acidic residues. The 102-residue stretch at 393 to 494 (QEFSLINVQI…RQLVSCLESF (102 aa)) folds into the RWD domain. Position 564 is a phosphoserine (S564). A WD 8 repeat occupies 660 to 706 (KSLGELYILNVNDTQETCQKNATSAMLVGRKDLVQVWSLATVATDLC). 3 positions are modified to phosphoserine: S839, S840, and S848. The tract at residues 849–870 (LTYSDPRERERDQHDKNKRLLD) is disordered. Basic and acidic residues predominate over residues 853–869 (DPRERERDQHDKNKRLL). The segment at 919–939 (YCSHCRSEVRGTQCAICKGFT) adopts a C4-type zinc-finger fold. Zn(2+)-binding residues include C920, C923, C932, C935, C945, C956, H961, H964, H967, C978, C982, C984, and C986. The RING-type; atypical zinc finger occupies 940-989 (FQCAICHVAVRGSSNFCLTCGHGGHTSHMMEWFRTQEVCPTGCGCHCLLE).

Belongs to the WD repeat WDR59 family. Component of the GATOR2 subcomplex, composed of MIOS, SEC13, SEH1L, WDR24 and WDR59. The GATOR2 complex interacts with CASTOR1 and CASTOR2; the interaction is negatively regulated by arginine. The GATOR2 complex interacts with SESN1, SESN2 and SESN3; the interaction is negatively regulated by amino acids. Interacts with DDB1-CUL4A/B E3 ligase complexes.

The protein resides in the lysosome membrane. The GATOR2 complex is negatively regulated by the upstream amino acid sensors CASTOR1 and SESN2, which sequester the GATOR2 complex in absence of amino acids. In the presence of abundant amino acids, GATOR2 is released from CASTOR1 and SESN2 and activated. As a component of the GATOR2 complex, functions as an activator of the amino acid-sensing branch of the mTORC1 signaling pathway. The GATOR2 complex indirectly activates mTORC1 through the inhibition of the GATOR1 subcomplex. GATOR2 probably acts as an E3 ubiquitin-protein ligase toward GATOR1. In the presence of abundant amino acids, the GATOR2 complex mediates ubiquitination of the NPRL2 core component of the GATOR1 complex, leading to GATOR1 inactivation. In the absence of amino acids, GATOR2 is inhibited, activating the GATOR1 complex. The sequence is that of GATOR2 complex protein WDR59 from Mus musculus (Mouse).